The primary structure comprises 506 residues: AMP phosphorylase (506 aa).

Residues G167, 193–198 (SRAITG), and T202 contribute to the AMP site. The active-site Proton donor is D255. The AMP site is built by S263 and K287.

The protein belongs to the thymidine/pyrimidine-nucleoside phosphorylase family. Type 2 subfamily.

The catalysed reaction is AMP + phosphate = alpha-D-ribose 1,5-bisphosphate + adenine. It carries out the reaction CMP + phosphate = cytosine + alpha-D-ribose 1,5-bisphosphate. It catalyses the reaction UMP + phosphate = alpha-D-ribose 1,5-bisphosphate + uracil. Catalyzes the conversion of AMP and phosphate to adenine and ribose 1,5-bisphosphate (R15P). Exhibits phosphorylase activity toward CMP and UMP in addition to AMP. Functions in an archaeal AMP degradation pathway, together with R15P isomerase and RubisCO. The protein is AMP phosphorylase of Methanosarcina acetivorans (strain ATCC 35395 / DSM 2834 / JCM 12185 / C2A).